We begin with the raw amino-acid sequence, 112 residues long: Integration host factor subunit alpha (112 aa).

The protein belongs to the bacterial histone-like protein family. Heterodimer of an alpha and a beta chain.

Its function is as follows. This protein is one of the two subunits of integration host factor, a specific DNA-binding protein that functions in genetic recombination as well as in transcriptional and translational control. This Allorhizobium ampelinum (strain ATCC BAA-846 / DSM 112012 / S4) (Agrobacterium vitis (strain S4)) protein is Integration host factor subunit alpha.